A 391-amino-acid polypeptide reads, in one-letter code: Serine protease 7 (391 aa).

Residues Met1 to Ala27 form the signal peptide. The propeptide at Gln28–Lys136 is activation peptide. One can recognise a Clip domain in the interval Ser30–Cys84. 3 disulfide bridges follow: Cys31–Cys83, Cys41–Cys72, and Cys47–Cys84. The interval Gly91–Leu121 is disordered. Disulfide bonds link Cys128–Cys264, Cys167–Cys183, Cys211–Cys216, Cys310–Cys327, and Cys337–Cys366. Residues Val137–Arg390 enclose the Peptidase S1 domain. N-linked (GlcNAc...) asparagine glycosylation is present at Asn141. Catalysis depends on His182, which acts as the Charge relay system. Ca(2+) is bound by residues Glu202, Asp204, Lys207, and Asp210. Asp244 acts as the Charge relay system in catalysis. The active-site Charge relay system is the Ser341.

The protein belongs to the peptidase S1 family. CLIP subfamily. In terms of assembly, interacts with Spn27A.

It localises to the secreted. Its function is as follows. Serine protease that, by cleaving and activating prophenoloxidase (PPO1) after immune challenge, plays an essential role in the melanization immune response to septic wounding. May function in diverse Hayan-dependent PPO1-activating cascades that are negatively controlled by different serpin proteins; Spn27A in the hemolymph and Spn77BA in the trachea. Important for the innate immune response to fungi. Regulation of melanization and PPO1 activation appears to be largely independent of the Toll signaling pathway. The chain is Serine protease 7 from Drosophila melanogaster (Fruit fly).